A 516-amino-acid chain; its full sequence is Nondiscriminating glutamyl-tRNA synthetase EARS2, mitochondrial (516 aa).

The N-terminal 39 residues, 1 to 39 (MRPAFIRGKWLSRTLELATGLGRRTCSSRESGREVRVRF), are a transit peptide targeting the mitochondrion. 38–40 (RFA) provides a ligand contact to L-glutamate. Residues 43–51 (PTGFLHLGG) carry the 'HIGH' region motif. His-48 lines the ATP pocket. L-glutamate-binding positions include Glu-74, 226 to 230 (YHLAN), and Arg-244. ATP-binding positions include Glu-247 and 282-286 (KLSKR). The 'KMSKS' region motif lies at 282–286 (KLSKR).

It belongs to the class-I aminoacyl-tRNA synthetase family. Glutamate--tRNA ligase type 1 subfamily.

It is found in the mitochondrion matrix. It catalyses the reaction tRNA(Glx) + L-glutamate + ATP = L-glutamyl-tRNA(Glx) + AMP + diphosphate. It carries out the reaction tRNA(Glu) + L-glutamate + ATP = L-glutamyl-tRNA(Glu) + AMP + diphosphate. The catalysed reaction is tRNA(Gln) + L-glutamate + ATP = L-glutamyl-tRNA(Gln) + AMP + diphosphate. In terms of biological role, non-discriminating glutamyl-tRNA synthetase that catalyzes aminoacylation of both mitochondrial tRNA(Glu) and tRNA(Gln) and participates in RNA aminoacylation for mitochondrial protein translation. Attachs glutamate to tRNA(Glu) or tRNA(Gln) in a two-step reaction: glutamate is first activated by ATP to form Glu-AMP and then transferred to the acceptor end of tRNA(Glu) or tRNA(Gln). The sequence is that of Nondiscriminating glutamyl-tRNA synthetase EARS2, mitochondrial from Xenopus tropicalis (Western clawed frog).